An 882-amino-acid chain; its full sequence is MGCLGNQLLIAILLLSVYGIYCIQYVTVFYGVPAWRNATIPLFCATKNRDTWGTTQCLPDNDDYSELALNVTESFDAWENTVTEQAIEDVWQLFETSIKPCVKLSPLCITMRCNKSETDKWGLTKSSTTTASTTTTTTAKSVETRDIVNETSPCVVHDNCTGLEQEPMISCKFNMTGLKRDKKKEYNETWYSADLVCEQGNSTGNESRCYMNHCNTSVIQECCDKDYWDAIRCRYCAPPGYALLRCNDTNYSGFMPNCSKVVVSSCTRMMETQTSTWFRFNGTRAENRTYIYWHGRDNRTIISLNKHYNLTMKCRRPGNKTVLPVTIMSALVFHSQPVNERPKQAWCRFGGNWKEAIKEVKQTIVKHPRYTGTNNTDKINLTAPRGGDPEVTFMWTNCRGEFLYCKMNWFLNWVEDRSLTTQKPKERHKRNYVPCHIRQIINTWHKVGKNVYLPPREGDLTCNSTVTSLIANINWTDGNQTSITMSAEVAELYRLELGDYKLVEITPIGLAPTNVKRYTTGGTSRNKRGVFVLGFLGFLATAGSAMGAASLTVTAQSRTLLAGIVQQQQQLLDVVKRQQELLRLTVWGTKNLQTRVSAIEKYLKDQAQLNAWGCAFRQVCHTTVPWPNASLTPDWNNETWQEWERKVDFLEANITALLEEAQIQQEKNMYELQKLNSWDVFGNWFDLTSWIKYIQYGIYIIVGVILLRIVIYIVQMLARLRQGYRPVFSSPPSYFQXTHTQQDPALPTKEGKKGDGGGSGGNSSWPWQIEYIHFLIRQLIRLLTWLFSNCRTLLSRAYQILQPIFQRLSATLRRIREVLRLELTYLQYGWSYFQEAVQAAQRSATETLAGAWGELWEALQRGGRWILAIPRRIRQGLELTLL.

A signal peptide spans 1 to 22; sequence MGCLGNQLLIAILLLSVYGIYC. Residues 23–697 lie on the Extracellular side of the membrane; it reads IQYVTVFYGV…TSWIKYIQYG (675 aa). A glycan (N-linked (GlcNAc...) asparagine; by host) is linked at Asn37. An intrachain disulfide couples Cys44 to Cys57. 19 N-linked (GlcNAc...) asparagine; by host glycosylation sites follow: Asn70, Asn114, Asn149, Asn159, Asn174, Asn187, Asn201, Asn205, Asn215, Asn247, Asn250, Asn257, Asn281, Asn287, Asn298, Asn309, Asn319, Asn374, and Asn380. 5 cysteine pairs are disulfide-bonded: Cys101–Cys223, Cys108–Cys214, Cys113–Cys171, Cys236–Cys266, and Cys246–Cys258. A V1 region spans residues 113–170; it reads CNKSETDKWGLTKSSTTTASTTTTTTAKSVETRDIVNETSPCVVHDNCTGLEQEPMIS. The V2 stretch occupies residues 171–214; it reads CKFNMTGLKRDKKKEYNETWYSADLVCEQGNSTGNESRCYMNHC. Residues 314-346 form a V3 region; sequence CRRPGNKTVLPVTIMSALVFHSQPVNERPKQAW. Cys314 and Cys347 are joined by a disulfide. Disulfide bonds link Cys398–Cys462 and Cys405–Cys435. The interval 405-435 is V4; sequence CKMNWFLNWVEDRSLTTQKPKERHKRNYVPC. Asn463, Asn474, and Asn479 each carry an N-linked (GlcNAc...) asparagine; by host glycan. The V5 stretch occupies residues 478-485; it reads GNQTSITM. A fusion peptide region spans residues 529–549; sequence GVFVLGFLGFLATAGSAMGAA. The immunosuppression stretch occupies residues 592–608; the sequence is LQTRVSAIEKYLKDQAQ. N-linked (GlcNAc...) asparagine; by host glycosylation is found at Asn628, Asn637, and Asn653. The stretch at 637-669 forms a coiled coil; sequence NETWQEWERKVDFLEANITALLEEAQIQQEKNM. The tract at residues 674 to 695 is MPER; binding to GalCer; it reads KLNSWDVFGNWFDLTSWIKYIQ. The helical transmembrane segment at 698–718 threads the bilayer; that stretch reads IYIIVGVILLRIVIYIVQMLA. Residues 719–882 lie on the Cytoplasmic side of the membrane; the sequence is RLRQGYRPVF…IRQGLELTLL (164 aa). A YXXV motif; contains endocytosis signal motif is present at residues 724-727; that stretch reads YRPV. The tract at residues 738-761 is disordered; the sequence is THTQQDPALPTKEGKKGDGGGSGG. A lipid anchor (S-palmitoyl cysteine; by host) is attached at Cys790. The Di-leucine internalization motif signature appears at 881–882; the sequence is LL.

As to quaternary structure, the mature envelope protein (Env) consists of a homotrimer of non-covalently associated gp120-gp41 heterodimers. The resulting complex protrudes from the virus surface as a spike. Interacts with host CD4 and CCR5. Gp120 also interacts with the C-type lectins CD209/DC-SIGN and CLEC4M/DC-SIGNR (collectively referred to as DC-SIGN(R)). In terms of assembly, the mature envelope protein (Env) consists of a homotrimer of non-covalently associated gp120-gp41 heterodimers. The resulting complex protrudes from the virus surface as a spike. In terms of processing, specific enzymatic cleavages in vivo yield mature proteins. Envelope glycoproteins are synthesized as an inactive precursor that is heavily N-glycosylated and processed likely by host cell furin in the Golgi to yield the mature SU and TM proteins. The cleavage site between SU and TM requires the minimal sequence [KR]-X-[KR]-R. Post-translationally, palmitoylation of the transmembrane protein and of Env polyprotein (prior to its proteolytic cleavage) is essential for their association with host cell membrane lipid rafts. Palmitoylation is therefore required for envelope trafficking to classical lipid rafts, but not for viral replication.

It localises to the virion membrane. The protein localises to the host cell membrane. It is found in the host endosome membrane. Its function is as follows. The surface protein gp120 (SU) attaches the virus to the host lymphoid cell by binding to the primary receptor CD4. This interaction induces a structural rearrangement creating a high affinity binding site for a chemokine coreceptor like CCR5. This peculiar 2 stage receptor-interaction strategy allows gp120 to maintain the highly conserved coreceptor-binding site in a cryptic conformation, protected from neutralizing antibodies. These changes are transmitted to the transmembrane protein gp41 and are thought to activate its fusogenic potential by unmasking its fusion peptide. Functionally, surface protein gp120 (SU) may target the virus to gut-associated lymphoid tissue (GALT) by binding host ITGA4/ITGB7 (alpha-4/beta-7 integrins), a complex that mediates T-cell migration to the GALT. Interaction between gp120 and ITGA4/ITGB7 would allow the virus to enter GALT early in the infection, infecting and killing most of GALT's resting CD4+ T-cells. This T-cell depletion is believed to be the major insult to the host immune system leading to AIDS. The surface protein gp120 is a ligand for CD209/DC-SIGN and CLEC4M/DC-SIGNR, which are respectively found on dendritic cells (DCs), and on endothelial cells of liver sinusoids and lymph node sinuses. These interactions allow capture of viral particles at mucosal surfaces by these cells and subsequent transmission to permissive cells. DCs are professional antigen presenting cells, critical for host immunity by inducing specific immune responses against a broad variety of pathogens. They act as sentinels in various tissues where they take up antigen, process it, and present it to T-cells following migration to lymphoid organs. SIV subverts the migration properties of dendritic cells to gain access to CD4+ T-cells in lymph nodes. Virus transmission to permissive T-cells occurs either in trans (without DCs infection, through viral capture and transmission), or in cis (following DCs productive infection, through the usual CD4-gp120 interaction), thereby inducing a robust infection. In trans infection, bound virions remain infectious over days and it is proposed that they are not degraded, but protected in non-lysosomal acidic organelles within the DCs close to the cell membrane thus contributing to the viral infectious potential during DCs' migration from the periphery to the lymphoid tissues. On arrival at lymphoid tissues, intact virions recycle back to DCs' cell surface allowing virus transmission to CD4+ T-cells. Virion capture also seems to lead to MHC-II-restricted viral antigen presentation, and probably to the activation of SIV-specific CD4+ cells. In terms of biological role, the transmembrane protein gp41 (TM) acts as a class I viral fusion protein. Under the current model, the protein has at least 3 conformational states: pre-fusion native state, pre-hairpin intermediate state, and post-fusion hairpin state. During fusion of viral and target intracellular membranes, the coiled coil regions (heptad repeats) assume a trimer-of-hairpins structure, positioning the fusion peptide in close proximity to the C-terminal region of the ectodomain. The formation of this structure appears to drive apposition and subsequent fusion of viral and target cell membranes. Complete fusion occurs in host cell endosomes. The virus undergoes clathrin-dependent internalization long before endosomal fusion, thus minimizing the surface exposure of conserved viral epitopes during fusion and reducing the efficacy of inhibitors targeting these epitopes. Membranes fusion leads to delivery of the nucleocapsid into the cytoplasm. Its function is as follows. The envelope glycoprotein gp160 precursor down-modulates cell surface CD4 antigen by interacting with it in the endoplasmic reticulum and blocking its transport to the cell surface. Functionally, the gp120-gp41 heterodimer allows rapid transcytosis of the virus through CD4 negative cells such as simple epithelial monolayers of the intestinal, rectal and endocervical epithelial barriers. Both gp120 and gp41 specifically recognize glycosphingolipids galactosyl-ceramide (GalCer) or 3' sulfo-galactosyl-ceramide (GalS) present in the lipid rafts structures of epithelial cells. Binding to these alternative receptors allows the rapid transcytosis of the virus through the epithelial cells. This transcytotic vesicle-mediated transport of virions from the apical side to the basolateral side of the epithelial cells does not involve infection of the cells themselves. The polypeptide is Envelope glycoprotein gp160 (env) (Simian immunodeficiency virus (isolate Mm142-83) (SIV-mac)).